The primary structure comprises 92 residues: Small ribosomal subunit protein uS19 (92 aa).

The protein belongs to the universal ribosomal protein uS19 family.

In terms of biological role, protein S19 forms a complex with S13 that binds strongly to the 16S ribosomal RNA. The sequence is that of Small ribosomal subunit protein uS19 from Bacillus mycoides (strain KBAB4) (Bacillus weihenstephanensis).